Consider the following 351-residue polypeptide: Protein-glutamate methylesterase/protein-glutamine glutaminase (351 aa).

The Response regulatory domain occupies 8–125 (TVVVVDDSLT…GEDPFAGLGD (118 aa)). D59 carries the post-translational modification 4-aspartylphosphate. Residues 151–345 (PKIGTVVGIG…PAILNLCERR (195 aa)) enclose the CheB-type methylesterase domain. Active-site residues include S162, H188, and D287.

This sequence belongs to the CheB family. In terms of processing, phosphorylated by CheA. Phosphorylation of the N-terminal regulatory domain activates the methylesterase activity.

The protein resides in the cytoplasm. It catalyses the reaction [protein]-L-glutamate 5-O-methyl ester + H2O = L-glutamyl-[protein] + methanol + H(+). The enzyme catalyses L-glutaminyl-[protein] + H2O = L-glutamyl-[protein] + NH4(+). Its function is as follows. Involved in chemotaxis. Part of a chemotaxis signal transduction system that modulates chemotaxis in response to various stimuli. Catalyzes the demethylation of specific methylglutamate residues introduced into the chemoreceptors (methyl-accepting chemotaxis proteins or MCP) by CheR. Also mediates the irreversible deamidation of specific glutamine residues to glutamic acid. This chain is Protein-glutamate methylesterase/protein-glutamine glutaminase, found in Gluconobacter oxydans (strain 621H) (Gluconobacter suboxydans).